Reading from the N-terminus, the 161-residue chain is 3-isopropylmalate dehydratase small subunit (161 aa).

The protein belongs to the LeuD family. LeuD type 2 subfamily. As to quaternary structure, heterodimer of LeuC and LeuD.

The catalysed reaction is (2R,3S)-3-isopropylmalate = (2S)-2-isopropylmalate. It functions in the pathway amino-acid biosynthesis; L-leucine biosynthesis; L-leucine from 3-methyl-2-oxobutanoate: step 2/4. In terms of biological role, catalyzes the isomerization between 2-isopropylmalate and 3-isopropylmalate, via the formation of 2-isopropylmaleate. The sequence is that of 3-isopropylmalate dehydratase small subunit from Pyrobaculum islandicum (strain DSM 4184 / JCM 9189 / GEO3).